A 270-amino-acid chain; its full sequence is MKKNRAFLKWAGGKYPLVDEIRRHLPAGDCLIEPFVGAGSVFLNTDYDAYILADINSDLINLYNIVKLRTDDFVRDARTLFADEFNNSDQFYLLREEFNTSTEPYRRALLFLYLNRHCYNGLCRYNLRGEFNVPFGRYKKPYFPEEELYWFAEKSRNATFVCEHYRDTMAKAAAGAVVYCDPPYAPLSATANFTAYHTNSFSIADQQSLAHLAHQLSVESRVPVLISNHDTELTRDWYQHAALYVVKARRTISRNILGRSKVNELLALYR.

S-adenosyl-L-methionine-binding residues include Trp10, Lys14, Asp54, and Asp181.

This sequence belongs to the N(4)/N(6)-methyltransferase family.

It catalyses the reaction a 2'-deoxyadenosine in DNA + S-adenosyl-L-methionine = an N(6)-methyl-2'-deoxyadenosine in DNA + S-adenosyl-L-homocysteine + H(+). An alpha subtype methylase, recognizes the double-stranded sequence 5'-GATC-3' and methylates A-2. Overexpression leads to hypermutability. May be involved in methyl-directed DNA mismatch repair, initiation of chromosome replication and gene expression. The polypeptide is DNA adenine methylase (Serratia marcescens).